The sequence spans 121 residues: Basic phospholipase A2 VRV-PL-V (121 aa).

Cystine bridges form between cysteine 26-cysteine 115, cysteine 28-cysteine 44, cysteine 43-cysteine 95, cysteine 49-cysteine 121, cysteine 50-cysteine 88, cysteine 57-cysteine 81, and cysteine 75-cysteine 86. Residues tyrosine 27, glycine 29, and glycine 31 each contribute to the Ca(2+) site. Histidine 47 is a catalytic residue. Aspartate 48 is a Ca(2+) binding site. Residue aspartate 89 is part of the active site.

This sequence belongs to the phospholipase A2 family. Group II subfamily. D49 sub-subfamily. Monomer. It depends on Ca(2+) as a cofactor. In terms of tissue distribution, expressed by the venom gland.

Its subcellular location is the secreted. The catalysed reaction is a 1,2-diacyl-sn-glycero-3-phosphocholine + H2O = a 1-acyl-sn-glycero-3-phosphocholine + a fatty acid + H(+). In terms of biological role, snake venom phospholipase A2 (PLA2) that has a low enzymatic activity. PLA2 catalyzes the calcium-dependent hydrolysis of the 2-acyl groups in 3-sn-phosphoglycerides. This Daboia russelii (Russel's viper) protein is Basic phospholipase A2 VRV-PL-V.